A 277-amino-acid polypeptide reads, in one-letter code: 3-methyl-2-oxobutanoate hydroxymethyltransferase (277 aa).

Mg(2+) is bound by residues aspartate 53 and aspartate 96. 3-methyl-2-oxobutanoate contacts are provided by residues 53–54 (DS), aspartate 96, and lysine 126. Glutamate 128 contacts Mg(2+). Glutamate 195 (proton acceptor) is an active-site residue.

This sequence belongs to the PanB family. As to quaternary structure, homodecamer; pentamer of dimers. It depends on Mg(2+) as a cofactor.

Its subcellular location is the cytoplasm. The enzyme catalyses 3-methyl-2-oxobutanoate + (6R)-5,10-methylene-5,6,7,8-tetrahydrofolate + H2O = 2-dehydropantoate + (6S)-5,6,7,8-tetrahydrofolate. Its pathway is cofactor biosynthesis; (R)-pantothenate biosynthesis; (R)-pantoate from 3-methyl-2-oxobutanoate: step 1/2. Functionally, catalyzes the reversible reaction in which hydroxymethyl group from 5,10-methylenetetrahydrofolate is transferred onto alpha-ketoisovalerate to form ketopantoate. This is 3-methyl-2-oxobutanoate hydroxymethyltransferase from Chlorobium luteolum (strain DSM 273 / BCRC 81028 / 2530) (Pelodictyon luteolum).